The primary structure comprises 350 residues: MAVLVVLLSSLVSSALANEFSILRSPGSVVFRNGNWPIPGDRIPDVAALSMGFSVKEDLSWPGLAVGNLFHRPRATIMVTVKGVDKLALPTGSVISYPLENAVPFSLDSVANSIHSLFSEETPVVLQLAPSEERVYMVGKANSVFEDLSVTLRQLRNRLFQENSVLNSLPLNSLSRNNEVDLLFLSELQVLHDISSLLSRHKHLAKDHSPDLYSLELAGLDELGKRYGEDSEQFRDASRILVDALQKFADDMYSLYGGNAVVELVTVKSFDTSLVRKSRTILETKQENTQSPYNLAYKYNLEYSVVFNLVLWIMTGLALAVIITSYNIWNMDPGYDSIIYRMTNQKIRMD.

An N-terminal signal peptide occupies residues 1-17 (MAVLVVLLSSLVSSALA). At 18-302 (NEFSILRSPG…YNLAYKYNLE (285 aa)) the chain is on the extracellular side. A helical membrane pass occupies residues 303-323 (YSVVFNLVLWIMTGLALAVII). The Cytoplasmic segment spans residues 324–350 (TSYNIWNMDPGYDSIIYRMTNQKIRMD). The Mediates retrograde transport to the ER motif lies at 346–350 (KIRMD).

In terms of assembly, interacts with renin. Accessory component of the multisubunit proton-transporting vacuolar (V)-ATPase protein pump. Interacts (via N-terminus) with ATP6AP1 (via N-terminus). Interacts with ATP6V0D1; ATP6V0D1 is a V-ATPase complex subunit and the interaction promotes V-ATPase complex assembly. Interacts with TMEM9; TMEM9 is a V-ATPase assembly regulator and the interaction induces the interaction with ATP6V0D1. Interacts with VMA21 (via N-terminus); VMA21 is a V-ATPase accessory component. In terms of processing, phosphorylated. Proteolytically cleaved by a furin-like convertase in the trans-Golgi network to generate N- and C-terminal fragments. As to expression, expressed in the brain.

Its subcellular location is the endoplasmic reticulum membrane. The protein localises to the lysosome membrane. It is found in the cytoplasmic vesicle. The protein resides in the autophagosome membrane. It localises to the cell projection. Its subcellular location is the dendritic spine membrane. The protein localises to the axon. It is found in the endosome membrane. The protein resides in the clathrin-coated vesicle membrane. It localises to the secretory vesicle. Its subcellular location is the synaptic vesicle membrane. Its function is as follows. Multifunctional protein which functions as a renin, prorenin cellular receptor and is involved in the assembly of the lysosomal proton-transporting V-type ATPase (V-ATPase) and the acidification of the endo-lysosomal system. May mediate renin-dependent cellular responses by activating ERK1 and ERK2. By increasing the catalytic efficiency of renin in AGT/angiotensinogen conversion to angiotensin I, may also play a role in the renin-angiotensin system (RAS). Through its function in V-type ATPase (v-ATPase) assembly and acidification of the lysosome it regulates protein degradation and may control different signaling pathways important for proper brain development, synapse morphology and synaptic transmission. The sequence is that of Renin receptor (Atp6ap2) from Rattus norvegicus (Rat).